The sequence spans 293 residues: Putative DNA glycosylase At3g47830 (293 aa).

Residues 1 to 10 (MSKAQKRKRL) are compositionally biased toward basic residues. The disordered stretch occupies residues 1–34 (MSKAQKRKRLNKYDGESKTPANKSTVDGGNPYPT). 2 residues coordinate DNA: asparagine 108 and lysine 151. Lysine 196 (schiff-base intermediate with DNA) is an active-site residue. DNA is bound by residues histidine 216 and aspartate 232.

It belongs to the DNA glycosylase family.

The protein is Putative DNA glycosylase At3g47830 of Arabidopsis thaliana (Mouse-ear cress).